The following is a 90-amino-acid chain: E22 protein (90 aa).

In Bacillus subtilis (Bacteriophage SP01), this protein is E22 protein (43).